We begin with the raw amino-acid sequence, 86 residues long: Exodeoxyribonuclease 7 small subunit (86 aa).

Belongs to the XseB family. As to quaternary structure, heterooligomer composed of large and small subunits.

The protein resides in the cytoplasm. It catalyses the reaction Exonucleolytic cleavage in either 5'- to 3'- or 3'- to 5'-direction to yield nucleoside 5'-phosphates.. Its function is as follows. Bidirectionally degrades single-stranded DNA into large acid-insoluble oligonucleotides, which are then degraded further into small acid-soluble oligonucleotides. In Xanthomonas oryzae pv. oryzae (strain MAFF 311018), this protein is Exodeoxyribonuclease 7 small subunit.